A 71-amino-acid chain; its full sequence is MLILTRRVGETLMVGDEVTVTVLGVKGNQVRIGVNAPKEVSVHREEIYMRIQAEKNGQLAGHDSSSSDEDN.

It belongs to the CsrA/RsmA family. In terms of assembly, homodimer; the beta-strands of each monomer intercalate to form a hydrophobic core, while the alpha-helices form wings that extend away from the core.

The protein localises to the cytoplasm. In terms of biological role, a key translational regulator that binds mRNA to regulate translation initiation and/or mRNA stability. Mediates global changes in gene expression, shifting from rapid growth to stress survival by linking envelope stress, the stringent response and the catabolite repression systems. Usually binds in the 5'-UTR; binding at or near the Shine-Dalgarno sequence prevents ribosome-binding, repressing translation, binding elsewhere in the 5'-UTR can activate translation and/or stabilize the mRNA. Its function is antagonized by small RNA(s). This is Translational regulator CsrA from Pseudoalteromonas atlantica (strain T6c / ATCC BAA-1087).